We begin with the raw amino-acid sequence, 438 residues long: 3-phosphoshikimate 1-carboxyvinyltransferase (438 aa).

3-phosphoshikimate-binding residues include lysine 21, serine 22, and arginine 26. Lysine 21 contributes to the phosphoenolpyruvate binding site. Glycine 95 and arginine 123 together coordinate phosphoenolpyruvate. 3-phosphoshikimate-binding residues include serine 167, glutamine 169, aspartate 315, and lysine 342. Glutamine 169 contacts phosphoenolpyruvate. Aspartate 315 (proton acceptor) is an active-site residue. Arginine 346 and arginine 387 together coordinate phosphoenolpyruvate.

Belongs to the EPSP synthase family. Monomer.

Its subcellular location is the cytoplasm. It catalyses the reaction 3-phosphoshikimate + phosphoenolpyruvate = 5-O-(1-carboxyvinyl)-3-phosphoshikimate + phosphate. It participates in metabolic intermediate biosynthesis; chorismate biosynthesis; chorismate from D-erythrose 4-phosphate and phosphoenolpyruvate: step 6/7. Catalyzes the transfer of the enolpyruvyl moiety of phosphoenolpyruvate (PEP) to the 5-hydroxyl of shikimate-3-phosphate (S3P) to produce enolpyruvyl shikimate-3-phosphate and inorganic phosphate. The chain is 3-phosphoshikimate 1-carboxyvinyltransferase from Coxiella burnetii (strain RSA 331 / Henzerling II).